Consider the following 175-residue polypeptide: ATP synthase subunit b (175 aa).

Residues 14–34 (LSPNPGLIFWTTVSFVIVLLI) traverse the membrane as a helical segment.

It belongs to the ATPase B chain family. As to quaternary structure, F-type ATPases have 2 components, F(1) - the catalytic core - and F(0) - the membrane proton channel. F(1) has five subunits: alpha(3), beta(3), gamma(1), delta(1), epsilon(1). F(0) has four main subunits: a(1), b(2) and c(10-14). The alpha and beta chains form an alternating ring which encloses part of the gamma chain. F(1) is attached to F(0) by a central stalk formed by the gamma and epsilon chains, while a peripheral stalk is formed by the delta and b chains.

It localises to the cell inner membrane. F(1)F(0) ATP synthase produces ATP from ADP in the presence of a proton or sodium gradient. F-type ATPases consist of two structural domains, F(1) containing the extramembraneous catalytic core and F(0) containing the membrane proton channel, linked together by a central stalk and a peripheral stalk. During catalysis, ATP synthesis in the catalytic domain of F(1) is coupled via a rotary mechanism of the central stalk subunits to proton translocation. Functionally, component of the F(0) channel, it forms part of the peripheral stalk, linking F(1) to F(0). This chain is ATP synthase subunit b, found in Chlorobium phaeobacteroides (strain DSM 266 / SMG 266 / 2430).